The chain runs to 269 residues: Aminodeoxychorismate lyase (269 aa).

Lys140 bears the N6-(pyridoxal phosphate)lysine mark.

It belongs to the class-IV pyridoxal-phosphate-dependent aminotransferase family. Homodimer. It depends on pyridoxal 5'-phosphate as a cofactor.

The catalysed reaction is 4-amino-4-deoxychorismate = 4-aminobenzoate + pyruvate + H(+). It participates in cofactor biosynthesis; tetrahydrofolate biosynthesis; 4-aminobenzoate from chorismate: step 2/2. Involved in the biosynthesis of p-aminobenzoate (PABA), a precursor of tetrahydrofolate. Converts 4-amino-4-deoxychorismate into 4-aminobenzoate (PABA) and pyruvate. This chain is Aminodeoxychorismate lyase (pabC), found in Escherichia coli (strain K12).